Here is a 406-residue protein sequence, read N- to C-terminus: Odorant receptor 10a (406 aa).

At 1 to 45 (MSEWLRFLKRDQQLDVYFFAVPRLSLDIMGYWPGKTGDTWPWRSL) the chain is on the cytoplasmic side. A helical transmembrane segment spans residues 46 to 66 (IHFAILAIGVATELHAGMCFL). The Extracellular portion of the chain corresponds to 67-74 (DRQQITLA). Residues 75–95 (LETLCPAGTSAVTLLKMFLML) form a helical membrane-spanning segment. The Cytoplasmic portion of the chain corresponds to 96-143 (RFRQDLSIMWNRLRGLLFDPNWERPEQRDIRLKHSAMAARINFWPLSA). Residues 144-164 (GFFTCTTYNLKPILIAMILYL) form a helical membrane-spanning segment. Topologically, residues 165–189 (QNRYEDFVWFTPFNMTMPKVLLNYP) are extracellular. N-linked (GlcNAc...) asparagine glycosylation occurs at asparagine 178. A helical transmembrane segment spans residues 190–210 (FFPLTYIFIAYTGYVTIFMFG). Residues 211 to 281 (GCDGFYFEFC…LTRFFRDRYT (71 aa)) lie on the Cytoplasmic side of the membrane. The helical transmembrane segment at 282 to 302 (IITLAHFVSAAMVIGFSMVNL) threads the bilayer. Residues 303–308 (LTLGNN) are Extracellular-facing. Residues 309–329 (GLGAMLYVAYTVAALSQLLVY) traverse the membrane as a helical segment. Over 330–372 (CYGGTLVAESSTGLCRAMFSCPWQLFKPKQRRLVQLLILRSQR) the chain is Cytoplasmic. A helical membrane pass occupies residues 373–393 (PVSMAVPFFSPSLATFAAILQ). Residues 394 to 406 (TSGSIIALVKSFQ) are Extracellular-facing.

The protein belongs to the insect chemoreceptor superfamily. Heteromeric odorant receptor channel (TC 1.A.69) family. Or1a subfamily. Interacts with Orco. Complexes exist early in the endomembrane system in olfactory sensory neurons (OSNs), coupling these complexes to the conserved ciliary trafficking pathway. Expressed in olfactory sensory neurons in the antenna.

The protein resides in the cell membrane. Odorant receptor which mediates acceptance or avoidance behavior, depending on its substrates. The odorant receptor repertoire encodes a large collection of odor stimuli that vary widely in identity, intensity, and duration. May form a complex with Orco to form odorant-sensing units, providing sensitive and prolonged odorant signaling and calcium permeability. Involved in the behavioral responses to esters, and specifically to ethyl hexanoate, benzaldehyde, and acetophenone. In Drosophila melanogaster (Fruit fly), this protein is Odorant receptor 10a (Or10a).